Reading from the N-terminus, the 373-residue chain is Glutamate 5-kinase (373 aa).

K15 is an ATP binding site. Residues S55, D142, and N154 each coordinate substrate. Residues 174-175 (TD) and 216-222 (TGGMATK) contribute to the ATP site. The 79-residue stretch at 281–359 (AGSIVVDAGA…SEIEGILGFR (79 aa)) folds into the PUA domain.

The protein belongs to the glutamate 5-kinase family.

The protein localises to the cytoplasm. The catalysed reaction is L-glutamate + ATP = L-glutamyl 5-phosphate + ADP. Its pathway is amino-acid biosynthesis; L-proline biosynthesis; L-glutamate 5-semialdehyde from L-glutamate: step 1/2. In terms of biological role, catalyzes the transfer of a phosphate group to glutamate to form L-glutamate 5-phosphate. The polypeptide is Glutamate 5-kinase (Citrifermentans bemidjiense (strain ATCC BAA-1014 / DSM 16622 / JCM 12645 / Bem) (Geobacter bemidjiensis)).